The sequence spans 51 residues: ATP synthase F(1) complex subunit epsilon, mitochondrial (51 aa).

3 positions are modified to N6-acetyllysine; alternate: Lys-21, Lys-32, and Lys-37. N6-succinyllysine; alternate is present on residues Lys-21, Lys-32, and Lys-37. Lys-44 carries the post-translational modification N6-acetyllysine.

This sequence belongs to the eukaryotic ATPase epsilon family. As to quaternary structure, component of the ATP synthase complex composed at least of ATP5F1A/subunit alpha, ATP5F1B/subunit beta, ATP5MC1/subunit c (homooctomer), MT-ATP6/subunit a, MT-ATP8/subunit 8, ATP5ME/subunit e, ATP5MF/subunit f, ATP5MG/subunit g, ATP5MK/subunit k, ATP5MJ/subunit j, ATP5F1C/subunit gamma, ATP5F1D/subunit delta, ATP5F1E/subunit epsilon, ATP5PF/subunit F6, ATP5PB/subunit b, ATP5PD/subunit d, ATP5PO/subunit OSCP. ATP synthase complex consists of a soluble F(1) head domain (subunits alpha(3) and beta(3)) - the catalytic core - and a membrane F(0) domain - the membrane proton channel (subunits c, a, 8, e, f, g, k and j). These two domains are linked by a central stalk (subunits gamma, delta, and epsilon) rotating inside the F1 region and a stationary peripheral stalk (subunits F6, b, d, and OSCP). Ubiquitous.

Its subcellular location is the mitochondrion. The protein resides in the mitochondrion inner membrane. Functionally, subunit epsilon, of the mitochondrial membrane ATP synthase complex (F(1)F(0) ATP synthase or Complex V) that produces ATP from ADP in the presence of a proton gradient across the membrane which is generated by electron transport complexes of the respiratory chain. ATP synthase complex consist of a soluble F(1) head domain - the catalytic core - and a membrane F(1) domain - the membrane proton channel. These two domains are linked by a central stalk rotating inside the F(1) region and a stationary peripheral stalk. During catalysis, ATP synthesis in the catalytic domain of F(1) is coupled via a rotary mechanism of the central stalk subunits to proton translocation. In vivo, can only synthesize ATP although its ATP hydrolase activity can be activated artificially in vitro. May be essential for the assembly of F(1) and may play an important role in the incorporation of the hydrophobic subunit c into the F(1)-c oligomer rotor of the mitochondrial ATP synthase complex. In Homo sapiens (Human), this protein is ATP synthase F(1) complex subunit epsilon, mitochondrial.